Here is a 330-residue protein sequence, read N- to C-terminus: Ribosomal RNA small subunit methyltransferase H (330 aa).

S-adenosyl-L-methionine-binding positions include 35–37 (GGY), aspartate 53, phenylalanine 80, aspartate 101, and glutamine 108.

This sequence belongs to the methyltransferase superfamily. RsmH family.

It is found in the cytoplasm. It carries out the reaction cytidine(1402) in 16S rRNA + S-adenosyl-L-methionine = N(4)-methylcytidine(1402) in 16S rRNA + S-adenosyl-L-homocysteine + H(+). Specifically methylates the N4 position of cytidine in position 1402 (C1402) of 16S rRNA. In Rhodopseudomonas palustris (strain BisB18), this protein is Ribosomal RNA small subunit methyltransferase H.